Consider the following 113-residue polypeptide: MDLEESRPKGVFECELCRLSVPYTYFGQRPPNSHSVVLLEQCFITKDPFTPDKEKFLILGSPCSLCEKAVCVGTECSLFYSKRFCLPCVLQHRDDFPPEIQQEVDKRKAQKKS.

Belongs to the CDPF1 family.

This is Cysteine-rich DPF motif domain-containing protein 1 (cdpf1) from Xenopus laevis (African clawed frog).